Consider the following 226-residue polypeptide: UPF0758 protein Daro_3142 (226 aa).

The 124-residue stretch at 103–226 (SFTSPGKVRD…PLSFAERGLL (124 aa)) folds into the MPN domain. Positions 174, 176, and 187 each coordinate Zn(2+). Positions 174–187 (HNHPSGIAEPSRAD) match the JAMM motif motif.

It belongs to the UPF0758 family.

The chain is UPF0758 protein Daro_3142 from Dechloromonas aromatica (strain RCB).